We begin with the raw amino-acid sequence, 208 residues long: Myosin light chain 6B (208 aa).

Positions 1–51 are disordered; it reads MPPKKDVPVKKPAGPSISKPAAKPAAAGAPPAKTKAEPAVPQAPQKTQEPP. Residues 10-40 show a composition bias toward low complexity; that stretch reads KKPAGPSISKPAAKPAAAGAPPAKTKAEPAV. EF-hand domains follow at residues 64–99, 141–176, and 176–208; these read DQLE…LGQN, GTYE…LGEK, and KMTE…ILSV.

Myosin is a hexamer of 2 heavy chains and 4 light chains.

Functionally, regulatory light chain of myosin. Does not bind calcium. This chain is Myosin light chain 6B (MYL6B), found in Homo sapiens (Human).